A 671-amino-acid chain; its full sequence is DNA ligase (671 aa).

NAD(+) is bound by residues 31–35 (DAEYD), 80–81 (SL), and Glu110. Residue Lys112 is the N6-AMP-lysine intermediate of the active site. 4 residues coordinate NAD(+): Arg133, Glu167, Lys283, and Lys307. Cys401, Cys404, Cys419, and Cys424 together coordinate Zn(2+). One can recognise a BRCT domain in the interval 587-671 (EEELVFAGKT…YLPDEGGLNE (85 aa)).

This sequence belongs to the NAD-dependent DNA ligase family. LigA subfamily. The cofactor is Mg(2+). Mn(2+) serves as cofactor.

The enzyme catalyses NAD(+) + (deoxyribonucleotide)n-3'-hydroxyl + 5'-phospho-(deoxyribonucleotide)m = (deoxyribonucleotide)n+m + AMP + beta-nicotinamide D-nucleotide.. In terms of biological role, DNA ligase that catalyzes the formation of phosphodiester linkages between 5'-phosphoryl and 3'-hydroxyl groups in double-stranded DNA using NAD as a coenzyme and as the energy source for the reaction. It is essential for DNA replication and repair of damaged DNA. The chain is DNA ligase from Listeria monocytogenes serotype 4a (strain HCC23).